The primary structure comprises 412 residues: B3 domain-containing protein Os02g0683500 (412 aa).

Residues 1–87 (MEFTTSSRFS…GGGGGGGGEA (87 aa)) form a disordered region. The span at 30–65 (TATAEAAPAPTSSSSSPAHHAASASASASASGSSTP) shows a compositional bias: low complexity. A compositionally biased stretch (gly residues) spans 73 to 86 (GASGSGGGGGGGGE). The TF-B3 DNA-binding region spans 96–200 (FDKVVTPSDV…RHRLFIDWKR (105 aa)). A disordered region spans residues 374–412 (RLLELPPHHHHGAESSAASSPSSSSSSKRDAHSALDLDL). Residues 387 to 399 (ESSAASSPSSSSS) show a composition bias toward low complexity. Residues 400–412 (SKRDAHSALDLDL) are compositionally biased toward basic and acidic residues.

The protein resides in the nucleus. The sequence is that of B3 domain-containing protein Os02g0683500 from Oryza sativa subsp. japonica (Rice).